The following is a 205-amino-acid chain: Small ribosomal subunit protein uS4 (205 aa).

Residues 1–49 (MSKRQSAKYKLDRRMGENIWGRPKSPVNRREYGPGQHGQRRKGKLSDFG) are disordered. The S4 RNA-binding domain occupies 94–157 (SRLDAIVFRA…KQLTVVLESV (64 aa)).

This sequence belongs to the universal ribosomal protein uS4 family. Part of the 30S ribosomal subunit. Contacts protein S5. The interaction surface between S4 and S5 is involved in control of translational fidelity.

In terms of biological role, one of the primary rRNA binding proteins, it binds directly to 16S rRNA where it nucleates assembly of the body of the 30S subunit. Functionally, with S5 and S12 plays an important role in translational accuracy. This Chelativorans sp. (strain BNC1) protein is Small ribosomal subunit protein uS4.